A 614-amino-acid chain; its full sequence is UvrABC system protein C (614 aa).

In terms of domain architecture, GIY-YIG spans 26–104 (NLPGVYKMLG…IKEYRPPYNV (79 aa)). The region spanning 215–250 (SDIHTALIEKMEASAEELDFEKAVFYRDQLSMLREV) is the UVR domain.

The protein belongs to the UvrC family. In terms of assembly, interacts with UvrB in an incision complex.

The protein resides in the cytoplasm. Functionally, the UvrABC repair system catalyzes the recognition and processing of DNA lesions. UvrC both incises the 5' and 3' sides of the lesion. The N-terminal half is responsible for the 3' incision and the C-terminal half is responsible for the 5' incision. The sequence is that of UvrABC system protein C from Psychrobacter cryohalolentis (strain ATCC BAA-1226 / DSM 17306 / VKM B-2378 / K5).